Reading from the N-terminus, the 198-residue chain is Protein GrpE (198 aa).

Over residues 1 to 14 (MSNEENKINEEALK) the composition is skewed to basic and acidic residues. A disordered region spans residues 1–20 (MSNEENKINEEALKQQDAAE).

The protein belongs to the GrpE family. As to quaternary structure, homodimer.

It localises to the cytoplasm. Its function is as follows. Participates actively in the response to hyperosmotic and heat shock by preventing the aggregation of stress-denatured proteins, in association with DnaK and GrpE. It is the nucleotide exchange factor for DnaK and may function as a thermosensor. Unfolded proteins bind initially to DnaJ; upon interaction with the DnaJ-bound protein, DnaK hydrolyzes its bound ATP, resulting in the formation of a stable complex. GrpE releases ADP from DnaK; ATP binding to DnaK triggers the release of the substrate protein, thus completing the reaction cycle. Several rounds of ATP-dependent interactions between DnaJ, DnaK and GrpE are required for fully efficient folding. This chain is Protein GrpE, found in Vibrio vulnificus (strain YJ016).